We begin with the raw amino-acid sequence, 284 residues long: Bifunctional protein FolD (284 aa).

NADP(+) is bound by residues 165-167, S190, and V231; that span reads GRS.

It belongs to the tetrahydrofolate dehydrogenase/cyclohydrolase family. As to quaternary structure, homodimer.

It carries out the reaction (6R)-5,10-methylene-5,6,7,8-tetrahydrofolate + NADP(+) = (6R)-5,10-methenyltetrahydrofolate + NADPH. It catalyses the reaction (6R)-5,10-methenyltetrahydrofolate + H2O = (6R)-10-formyltetrahydrofolate + H(+). Its pathway is one-carbon metabolism; tetrahydrofolate interconversion. Its function is as follows. Catalyzes the oxidation of 5,10-methylenetetrahydrofolate to 5,10-methenyltetrahydrofolate and then the hydrolysis of 5,10-methenyltetrahydrofolate to 10-formyltetrahydrofolate. This Brevibacillus brevis (strain 47 / JCM 6285 / NBRC 100599) protein is Bifunctional protein FolD.